The sequence spans 396 residues: 1-deoxy-D-xylulose 5-phosphate reductoisomerase (396 aa).

Residues Thr10, Gly11, Ser12, Ile13, and Asn123 each contribute to the NADPH site. Position 124 (Lys124) interacts with 1-deoxy-D-xylulose 5-phosphate. Glu125 lines the NADPH pocket. Asp149 is a binding site for Mn(2+). 1-deoxy-D-xylulose 5-phosphate-binding residues include Ser150, Glu151, Ser185, and His208. Residue Glu151 coordinates Mn(2+). NADPH is bound at residue Gly214. Residues Ser221, Asn226, Lys227, and Glu230 each coordinate 1-deoxy-D-xylulose 5-phosphate. Glu230 contacts Mn(2+).

It belongs to the DXR family. It depends on Mg(2+) as a cofactor. Mn(2+) is required as a cofactor.

It catalyses the reaction 2-C-methyl-D-erythritol 4-phosphate + NADP(+) = 1-deoxy-D-xylulose 5-phosphate + NADPH + H(+). It functions in the pathway isoprenoid biosynthesis; isopentenyl diphosphate biosynthesis via DXP pathway; isopentenyl diphosphate from 1-deoxy-D-xylulose 5-phosphate: step 1/6. In terms of biological role, catalyzes the NADPH-dependent rearrangement and reduction of 1-deoxy-D-xylulose-5-phosphate (DXP) to 2-C-methyl-D-erythritol 4-phosphate (MEP). In Shewanella baltica (strain OS223), this protein is 1-deoxy-D-xylulose 5-phosphate reductoisomerase.